The primary structure comprises 203 residues: Urease accessory protein UreG (203 aa).

10 to 17 lines the GTP pocket; it reads GPVGAGKT.

It belongs to the SIMIBI class G3E GTPase family. UreG subfamily. Homodimer. UreD, UreF and UreG form a complex that acts as a GTP-hydrolysis-dependent molecular chaperone, activating the urease apoprotein by helping to assemble the nickel containing metallocenter of UreC. The UreE protein probably delivers the nickel.

It is found in the cytoplasm. Functionally, facilitates the functional incorporation of the urease nickel metallocenter. This process requires GTP hydrolysis, probably effectuated by UreG. This Micrococcus luteus (strain ATCC 4698 / DSM 20030 / JCM 1464 / CCM 169 / CCUG 5858 / IAM 1056 / NBRC 3333 / NCIMB 9278 / NCTC 2665 / VKM Ac-2230) (Micrococcus lysodeikticus) protein is Urease accessory protein UreG.